A 405-amino-acid polypeptide reads, in one-letter code: L-rhamnonate dehydratase (405 aa).

The substrate site is built by His33 and Arg59. Positions 226, 252, and 280 each coordinate Mg(2+). The Proton acceptor role is filled by His329. Substrate is bound at residue Glu349.

Belongs to the mandelate racemase/muconate lactonizing enzyme family. RhamD subfamily. As to quaternary structure, homooctamer; tetramer of dimers. The cofactor is Mg(2+).

It catalyses the reaction L-rhamnonate = 2-dehydro-3-deoxy-L-rhamnonate + H2O. Catalyzes the dehydration of L-rhamnonate to 2-keto-3-deoxy-L-rhamnonate (KDR). This Salmonella paratyphi C (strain RKS4594) protein is L-rhamnonate dehydratase.